The following is a 308-amino-acid chain: Cytochrome b (308 aa).

Transmembrane regions (helical) follow at residues 1–21 (FGSL…LLAT), 45–66 (WLIR…YLHI), 81–101 (WNTG…GYVL), and 146–166 (FFAL…VHLT). Heme b-binding residues include H51 and H65. The heme b site is built by H150 and H164. Residue H169 participates in a ubiquinone binding. The next 3 membrane-spanning stretches (helical) occupy residues 194-214 (MKDI…ALFS), 256-276 (LGGV…PLLH), and 288-308 (LSQI…WVGS).

It belongs to the cytochrome b family. As to quaternary structure, the cytochrome bc1 complex contains 11 subunits: 3 respiratory subunits (MT-CYB, CYC1 and UQCRFS1), 2 core proteins (UQCRC1 and UQCRC2) and 6 low-molecular weight proteins (UQCRH/QCR6, UQCRB/QCR7, UQCRQ/QCR8, UQCR10/QCR9, UQCR11/QCR10 and a cleavage product of UQCRFS1). This cytochrome bc1 complex then forms a dimer. It depends on heme b as a cofactor.

It is found in the mitochondrion inner membrane. In terms of biological role, component of the ubiquinol-cytochrome c reductase complex (complex III or cytochrome b-c1 complex) that is part of the mitochondrial respiratory chain. The b-c1 complex mediates electron transfer from ubiquinol to cytochrome c. Contributes to the generation of a proton gradient across the mitochondrial membrane that is then used for ATP synthesis. This Amblyornis macgregoriae (Macgregor's bowerbird) protein is Cytochrome b (MT-CYB).